The following is a 155-amino-acid chain: MQCPHCHHNSSRVVDSRPTDGGRAIRRRRECENCGFRFTTFERVEQTPLLVIKKNGTREEFNREKILKGLIRAAEKRPVTMEQMQSIVDSVENQLRAIGENEVSSQAIGEFVMSKLADVDDVAYIRFASVYRQFKDMSVFMQELQDMMKKEKTKK.

Residues 1–10 (MQCPHCHHNS) are compositionally biased toward basic residues. The interval 1–21 (MQCPHCHHNSSRVVDSRPTDG) is disordered. Residues 3-34 (CPHCHHNSSRVVDSRPTDGGRAIRRRRECENC) fold into a zinc finger. Positions 49 to 139 (LLVIKKNGTR…VYRQFKDMSV (91 aa)) constitute an ATP-cone domain.

This sequence belongs to the NrdR family. Requires Zn(2+) as cofactor.

Functionally, negatively regulates transcription of bacterial ribonucleotide reductase nrd genes and operons by binding to NrdR-boxes. This is Transcriptional repressor NrdR from Lacticaseibacillus casei (strain BL23) (Lactobacillus casei).